The primary structure comprises 666 residues: Probable potassium transport system protein Kup (666 aa).

12 helical membrane-spanning segments follow: residues 16–36 (GFIIALGIVYGDIGTSPLYTM), 58–78 (ISLIIWTLTLITTIKYVLIAL), 100–120 (PWLIIPAMIGGATLLSDGALT), 141–161 (IYQNQTNVIITTLVILIVLFG), 165–185 (FGTGFIGKIFGPVMFIWFSFL), 221–241 (IFILGSIFLATTGAEALYSDL), 253–273 (WPFVKMCIVLSYCGQAAWILA), 292–312 (LTVYVVILATLAAIIASQALI), 343–363 (LYIPVINWILFAVTSCTVLYF), 373–393 (YGLAITITMLMTTILLNYYLI), 399–419 (PFLAHLVMTFFALVEFIFFWA), and 424–444 (FMHGGYVVVILALAIVFVMFI).

The protein belongs to the HAK/KUP transporter (TC 2.A.72) family.

The protein resides in the cell membrane. It catalyses the reaction K(+)(in) + H(+)(in) = K(+)(out) + H(+)(out). Functionally, transport of potassium into the cell. Likely operates as a K(+):H(+) symporter. The polypeptide is Probable potassium transport system protein Kup (Streptococcus pyogenes serotype M5 (strain Manfredo)).